The chain runs to 447 residues: Argininosuccinate lyase (447 aa).

It belongs to the lyase 1 family. Argininosuccinate lyase subfamily.

It localises to the cytoplasm. It carries out the reaction 2-(N(omega)-L-arginino)succinate = fumarate + L-arginine. It functions in the pathway amino-acid biosynthesis; L-arginine biosynthesis; L-arginine from L-ornithine and carbamoyl phosphate: step 3/3. The polypeptide is Argininosuccinate lyase (Sulfolobus acidocaldarius (strain ATCC 33909 / DSM 639 / JCM 8929 / NBRC 15157 / NCIMB 11770)).